A 100-amino-acid polypeptide reads, in one-letter code: Integration host factor subunit alpha (100 aa).

It belongs to the bacterial histone-like protein family. In terms of assembly, heterodimer of an alpha and a beta chain.

Its function is as follows. This protein is one of the two subunits of integration host factor, a specific DNA-binding protein that functions in genetic recombination as well as in transcriptional and translational control. The chain is Integration host factor subunit alpha from Erythrobacter litoralis (strain HTCC2594).